Reading from the N-terminus, the 211-residue chain is Protoglabretal synthase MOI1 (211 aa).

Helical transmembrane passes span A16 to I36, L50 to F70, V104 to Y124, I135 to A155, and I179 to C199. Positions I46–A188 constitute an EXPERA domain.

It belongs to the EBP family. In terms of tissue distribution, expressed in maturing fruits and in juice vesicles.

Its subcellular location is the membrane. It catalyses the reaction 7,8-epoxymelianol = protoglabretal. The protein operates within secondary metabolite biosynthesis; terpenoid biosynthesis. Functionally, isomerase involved in the biosynthesis of glabretanes triterpene natural products such as glabretal, a component with in vitro antiproliferative properties on lymphocytes. Catalyzes the conversion of 7,8-epoxymelianol to protoglabretal via skeletal rearrangements. In Citrus sinensis (Sweet orange), this protein is Protoglabretal synthase MOI1.